We begin with the raw amino-acid sequence, 306 residues long: Heterogeneous nuclear ribonucleoproteins C1/C2 (306 aa).

Ala-2 is modified (N-acetylalanine). Residues Lys-8, Lys-50, Lys-89, and Lys-94 each participate in a glycyl lysine isopeptide (Lys-Gly) (interchain with G-Cter in SUMO2) cross-link. An RRM domain is found at 16 to 87; sequence SRVFIGNLNT…QVLDINLAAE (72 aa). Ser-107 and Val-108 each carry phosphoserine. Thr-109 bears the Phosphothreonine mark. A phosphoserine mark is found at Ser-113, Ser-115, and Ser-121. Disordered stretches follow at residues 139-190 and 221-306; these read YPAR…KLKG and QSKQ…EDDS. A Nuclear localization signal motif is present at residues 155–161; sequence PSKRQRV. Phosphoserine occurs at positions 162 and 166. Residues 175-185 are compositionally biased toward low complexity; it reads SKSGQRGSSKS. Lys-176 is subject to N6-acetyllysine; alternate. A Glycyl lysine isopeptide (Lys-Gly) (interchain with G-Cter in SUMO2); alternate cross-link involves residue Lys-176. A coiled-coil region spans residues 190 to 238; it reads GDDLQAIKKELTQIKQKVDSLLENLEKIEKEQSKQAVEMKNDKSEEEQS. Residues 221–232 are compositionally biased toward basic and acidic residues; that stretch reads QSKQAVEMKNDK. Glycyl lysine isopeptide (Lys-Gly) (interchain with G-Cter in SUMO2) cross-links involve residues Lys-223 and Lys-229. Lys-232 participates in a covalent cross-link: Glycyl lysine isopeptide (Lys-Gly) (interchain with G-Cter in SUMO2); alternate. Lys-232 participates in a covalent cross-link: Glycyl lysine isopeptide (Lys-Gly) (interchain with G-Cter in SUMO1); alternate. Residues Ser-233, Ser-238, Ser-239, and Ser-241 each carry the phosphoserine modification. Positions 242–253 are enriched in basic and acidic residues; that stretch reads VKKDETNVKMES. Glycyl lysine isopeptide (Lys-Gly) (interchain with G-Cter in SUMO2) cross-links involve residues Lys-243 and Lys-244. Lys-250 participates in a covalent cross-link: Glycyl lysine isopeptide (Lys-Gly) (interchain with G-Cter in SUMO2); alternate. Residue Lys-250 forms a Glycyl lysine isopeptide (Lys-Gly) (interchain with G-Cter in SUMO); alternate linkage. A phosphoserine mark is found at Ser-253 and Ser-260. The segment covering 255 to 276 has biased composition (acidic residues); that stretch reads GGADDSAEEGDLLDDDDNEDRG. The span at 277–287 shows a compositional bias: basic and acidic residues; it reads DDQLELIKDDE. Acidic residues predominate over residues 288 to 306; sequence KEAEEGEDDRDSANGEDDS. A phosphoserine mark is found at Ser-299 and Ser-306.

Belongs to the RRM HNRPC family. RALY subfamily. As to quaternary structure, tetramer composed of 3 copies of isoform C1 and 1 copy of isoform C2. Assembly of 3 tetramers with bound pre-mRNA gives rise to a 19S complex that interacts with HNRNPA2B1 tetramers. Component of the 40S hnRNP particle. Identified in the spliceosome C complex. Interacts with IGF2BP1. Interacts with DHX9; this interaction is direct, enhanced probably by their concomitant binding to RNA and mediates the attachment to actin filaments. Interacts with PPIA/CYPA. Interacts with YWHAE. Post-translationally, phosphorylated on Ser-260 and Ser-299 in resting cells. Phosphorylated on Ser-253 and on 1 serine residue in the poly-Ser stretch at position 238 in response to hydrogen peroxide. In terms of processing, sumoylated. Sumoylation reduces affinity for mRNA. Ubiquitinated and degraded after nucleo-cytoplasmic transport by YWHAE.

It is found in the nucleus. Its function is as follows. Binds pre-mRNA and nucleates the assembly of 40S hnRNP particles. Interacts with poly-U tracts in the 3'-UTR or 5'-UTR of mRNA and modulates the stability and the level of translation of bound mRNA molecules. Single HNRNPC tetramers bind 230-240 nucleotides. Trimers of HNRNPC tetramers bind 700 nucleotides. May play a role in the early steps of spliceosome assembly and pre-mRNA splicing. N6-methyladenosine (m6A) has been shown to alter the local structure in mRNAs and long non-coding RNAs (lncRNAs) via a mechanism named 'm(6)A-switch', facilitating binding of HNRNPC, leading to regulation of mRNA splicing. In Homo sapiens (Human), this protein is Heterogeneous nuclear ribonucleoproteins C1/C2 (HNRNPC).